Here is a 170-residue protein sequence, read N- to C-terminus: Putative 5'(3')-deoxyribonucleotidase (170 aa).

Asp28 (nucleophile) is an active-site residue. Asp28, Asp30, and Asp134 together coordinate Mg(2+). The Proton donor role is filled by Asp30.

Belongs to the 5'(3')-deoxyribonucleotidase family. Mg(2+) is required as a cofactor.

Its function is as follows. Dephosphorylates the 5' and 2'(3')-phosphates of deoxyribonucleotides. This Vibrio parahaemolyticus (KVP40) protein is Putative 5'(3')-deoxyribonucleotidase.